The primary structure comprises 150 residues: MNKENKTQAVNKAKNTAKVAKKGSSITKHKTYTGVRFFRPKTLQLAKAPKYSRTVRAHLKVSGHLDNHSVVKTPLTTEKAMKKMEDENTMVFYVHNRSTKPQIKSAFEKLYNVKVRSVNTLNTITGNKKAYIRLAADSDSLTLANKIGLI.

Residues 1-24 form a disordered region; sequence MNKENKTQAVNKAKNTAKVAKKGS. A compositionally biased stretch (low complexity) spans 7–18; sequence TQAVNKAKNTAK.

This sequence belongs to the universal ribosomal protein uL23 family.

This is Large ribosomal subunit protein uL23 (RPL23A) from Tetrahymena thermophila (strain SB210).